Here is a 419-residue protein sequence, read N- to C-terminus: MVEIDPFEMAVKQLERAAQYMDISEEALEWLKKPMRIVEVSVPIEMDDGSVKVFTGFRVQHNWARGPTKGGIRWHPAETLSTVKALATWMTWKVAVVDLPYGGGKGGIIVNPKELSEREQERLARAYIRAVYDVIGPWTDIPAPDVYTNPKIMGWMMDEYETIMRRKGPAFGVITGKPLSIGGSLGRGTATAQGAIFTIREAAKALGIDLKGKKIAVQGYGNAGYYTAKLAKEQLGMTVVAVSDSRGGIYNPDGLDPDEVLKWKREHGSVKDFPGATNITNEELLELEVDVLAPAAIEEVITEKNADNIKAKIVAEVANGPVTPEADDILREKGILQIPDFLCNAGGVTVSYFEWVQNINGYYWTEEEVREKLDKKMTKAFWEVYNTHKDKNIHMRDAAYVVAVSRVYQAMKDRGWVKK.

The active site involves Lys105. 219–225 is an NAD(+) binding site; it reads GYGNAGY.

Belongs to the Glu/Leu/Phe/Val dehydrogenases family. In terms of assembly, homohexamer.

It carries out the reaction L-glutamate + NAD(+) + H2O = 2-oxoglutarate + NH4(+) + NADH + H(+). It catalyses the reaction L-glutamate + NADP(+) + H2O = 2-oxoglutarate + NH4(+) + NADPH + H(+). This Thermococcus profundus protein is Glutamate dehydrogenase (gdhA).